The following is a 349-amino-acid chain: uncharacterized protein (349 aa).

Residues 116–135 (HFSQTNPKSTPEPPCTSSSG) show a composition bias toward polar residues. The segment at 116 to 148 (HFSQTNPKSTPEPPCTSSSGAGDCHENLPADGY) is disordered.

This is an uncharacterized protein from Caenorhabditis elegans.